The chain runs to 215 residues: Pyrrolidone-carboxylate peptidase (215 aa).

Residues Glu-80, Cys-143, and His-167 contribute to the active site.

Belongs to the peptidase C15 family. Homotetramer.

It is found in the cytoplasm. It catalyses the reaction Release of an N-terminal pyroglutamyl group from a polypeptide, the second amino acid generally not being Pro.. Removes 5-oxoproline from various penultimate amino acid residues except L-proline. In Bacillus thuringiensis subsp. konkukian (strain 97-27), this protein is Pyrrolidone-carboxylate peptidase.